The primary structure comprises 528 residues: Phosphoenolpyruvate carboxykinase (ATP) (528 aa).

Arg-56, Tyr-192, and Lys-198 together coordinate substrate. ATP contacts are provided by residues Lys-198, His-217, and 233 to 241; that span reads GLSGTGKTT. Residues Lys-198 and His-217 each contribute to the Mn(2+) site. Asp-254 provides a ligand contact to Mn(2+). ATP contacts are provided by Glu-282, Arg-319, and Thr-444. Position 319 (Arg-319) interacts with substrate.

This sequence belongs to the phosphoenolpyruvate carboxykinase (ATP) family. Requires Mn(2+) as cofactor.

It is found in the cytoplasm. It catalyses the reaction oxaloacetate + ATP = phosphoenolpyruvate + ADP + CO2. Its pathway is carbohydrate biosynthesis; gluconeogenesis. In terms of biological role, involved in the gluconeogenesis. Catalyzes the conversion of oxaloacetate (OAA) to phosphoenolpyruvate (PEP) through direct phosphoryl transfer between the nucleoside triphosphate and OAA. This Bacillus anthracis (strain A0248) protein is Phosphoenolpyruvate carboxykinase (ATP).